We begin with the raw amino-acid sequence, 345 residues long: Anthranilate phosphoribosyltransferase (345 aa).

Residues Gly-81, 84–85 (GD), Ser-89, 91–94 (NVST), 109–117 (KHGNRAATS), and Ala-121 each bind 5-phospho-alpha-D-ribose 1-diphosphate. Residue Gly-81 participates in anthranilate binding. Ser-93 serves as a coordination point for Mg(2+). Asn-112 is a binding site for anthranilate. Arg-167 lines the anthranilate pocket. The Mg(2+) site is built by Asp-226 and Glu-227.

It belongs to the anthranilate phosphoribosyltransferase family. Homodimer. The cofactor is Mg(2+).

It catalyses the reaction N-(5-phospho-beta-D-ribosyl)anthranilate + diphosphate = 5-phospho-alpha-D-ribose 1-diphosphate + anthranilate. It functions in the pathway amino-acid biosynthesis; L-tryptophan biosynthesis; L-tryptophan from chorismate: step 2/5. Its function is as follows. Catalyzes the transfer of the phosphoribosyl group of 5-phosphorylribose-1-pyrophosphate (PRPP) to anthranilate to yield N-(5'-phosphoribosyl)-anthranilate (PRA). This Methylobacterium radiotolerans (strain ATCC 27329 / DSM 1819 / JCM 2831 / NBRC 15690 / NCIMB 10815 / 0-1) protein is Anthranilate phosphoribosyltransferase.